Here is a 466-residue protein sequence, read N- to C-terminus: MAHANHFDVIVIGSGPGGEGAAMGLTKAGLKVAVVEKESSVGGGCTHWGTIPSKALRHAVSRIIEFNSNPLFCKNNSSLHATFSTILGHAKSVIDKQTRLRQGFYDRNQCQLIFGTARFTDAHTISVTQNDGTEEVYTADKFVIATGSRPYQPADVDFNHERIYDSDSILSLKHDPRHIIIYGAGVIGCEYASIFRGLGVKTDLINTRDRLLAFLDNEVSDALSYHFWNSGVVIRNDETYERIEGTEDGVIVHLQSGKKMKADCLLYANGRTGNTDKLNLPAVGLQGDSRGQLKVDGNYQTEVEHVYAVGDVIGYPSLASAAYDQGRFVAQAITKGKADGYLIDDIPTGIYTIPEISSVGKTEQELTAAKVPYEVGRSSFKHLARAQIAGKDIGSLKILFHRETKEILGIHCFGERAAEIIHIGQAIMEQKGEANTIEYFVNTTFNYPTMAEAYRVAALNGLNRLF.

36–45 (EKESSVGGGC) contacts FAD.

Belongs to the class-I pyridine nucleotide-disulfide oxidoreductase family. It depends on FAD as a cofactor.

The protein localises to the cytoplasm. It carries out the reaction NAD(+) + NADPH = NADH + NADP(+). Functionally, conversion of NADPH, generated by peripheral catabolic pathways, to NADH, which can enter the respiratory chain for energy generation. The protein is Soluble pyridine nucleotide transhydrogenase of Vibrio vulnificus (strain CMCP6).